Here is a 353-residue protein sequence, read N- to C-terminus: Photosystem II protein D1 (353 aa).

Thr2 is subject to N-acetylthreonine. A Phosphothreonine modification is found at Thr2. 3 helical membrane-spanning segments follow: residues 29-46 (YIGW…TATS), 118-133 (HFFI…EWEL), and 142-156 (WIAV…AATA). His118 contributes to the chlorophyll a binding site. Position 126 (Tyr126) interacts with pheophytin a. [CaMn4O5] cluster-binding residues include Asp170 and Glu189. A helical transmembrane segment spans residues 197 to 218 (FHMLGVAGVFGGSLFSAMHGSL). A chlorophyll a-binding site is contributed by His198. Residues His215 and 264-265 (SF) each bind a quinone. A Fe cation-binding site is contributed by His215. Position 272 (His272) interacts with Fe cation. The chain crosses the membrane as a helical span at residues 274 to 288 (FLAAWPVIGIWFTAL). 4 residues coordinate [CaMn4O5] cluster: His332, Glu333, Asp342, and Ala344. Positions 345 to 353 (AFEAPSINA) are excised as a propeptide.

The protein belongs to the reaction center PufL/M/PsbA/D family. In terms of assembly, PSII is composed of 1 copy each of membrane proteins PsbA, PsbB, PsbC, PsbD, PsbE, PsbF, PsbH, PsbI, PsbJ, PsbK, PsbL, PsbM, PsbT, PsbX, PsbY, PsbZ, Psb30/Ycf12, at least 3 peripheral proteins of the oxygen-evolving complex and a large number of cofactors. It forms dimeric complexes. The cofactor is The D1/D2 heterodimer binds P680, chlorophylls that are the primary electron donor of PSII, and subsequent electron acceptors. It shares a non-heme iron and each subunit binds pheophytin, quinone, additional chlorophylls, carotenoids and lipids. D1 provides most of the ligands for the Mn4-Ca-O5 cluster of the oxygen-evolving complex (OEC). There is also a Cl(-1) ion associated with D1 and D2, which is required for oxygen evolution. The PSII complex binds additional chlorophylls, carotenoids and specific lipids.. Tyr-161 forms a radical intermediate that is referred to as redox-active TyrZ, YZ or Y-Z. Post-translationally, C-terminally processed by CTPA; processing is essential to allow assembly of the oxygen-evolving complex and thus photosynthetic growth.

The protein localises to the plastid. It localises to the chloroplast thylakoid membrane. The catalysed reaction is 2 a plastoquinone + 4 hnu + 2 H2O = 2 a plastoquinol + O2. In terms of biological role, photosystem II (PSII) is a light-driven water:plastoquinone oxidoreductase that uses light energy to abstract electrons from H(2)O, generating O(2) and a proton gradient subsequently used for ATP formation. It consists of a core antenna complex that captures photons, and an electron transfer chain that converts photonic excitation into a charge separation. The D1/D2 (PsbA/PsbD) reaction center heterodimer binds P680, the primary electron donor of PSII as well as several subsequent electron acceptors. In Chlamydomonas moewusii (Chlamydomonas eugametos), this protein is Photosystem II protein D1.